The primary structure comprises 222 residues: Triosephosphate isomerase (222 aa).

Residue 9 to 11 (NYK) coordinates substrate. His93 (electrophile) is an active-site residue. Residue Glu141 is the Proton acceptor of the active site. Residues Ile146, Gly181, and 202–203 (AS) each bind substrate.

It belongs to the triosephosphate isomerase family. In terms of assembly, homotetramer; dimer of dimers.

Its subcellular location is the cytoplasm. The enzyme catalyses D-glyceraldehyde 3-phosphate = dihydroxyacetone phosphate. It participates in carbohydrate biosynthesis; gluconeogenesis. The protein operates within carbohydrate degradation; glycolysis; D-glyceraldehyde 3-phosphate from glycerone phosphate: step 1/1. In terms of biological role, involved in the gluconeogenesis. Catalyzes stereospecifically the conversion of dihydroxyacetone phosphate (DHAP) to D-glyceraldehyde-3-phosphate (G3P). In Methanobrevibacter smithii (strain ATCC 35061 / DSM 861 / OCM 144 / PS), this protein is Triosephosphate isomerase.